A 245-amino-acid chain; its full sequence is Geranylgeranylglyceryl phosphate synthase (245 aa).

Mg(2+)-binding residues include aspartate 22 and serine 51. Residues 169-175 (YLEAGSG), 200-201 (GG), and 222-223 (GT) each bind sn-glycerol 1-phosphate.

This sequence belongs to the GGGP/HepGP synthase family. Group II subfamily. As to quaternary structure, homotetramer. Homohexamer. The cofactor is Mg(2+).

Its subcellular location is the cytoplasm. It catalyses the reaction sn-glycerol 1-phosphate + (2E,6E,10E)-geranylgeranyl diphosphate = sn-3-O-(geranylgeranyl)glycerol 1-phosphate + diphosphate. It functions in the pathway membrane lipid metabolism; glycerophospholipid metabolism. Prenyltransferase that catalyzes the transfer of the geranylgeranyl moiety of geranylgeranyl diphosphate (GGPP) to the C3 hydroxyl of sn-glycerol-1-phosphate (G1P). This reaction is the first ether-bond-formation step in the biosynthesis of archaeal membrane lipids. The polypeptide is Geranylgeranylglyceryl phosphate synthase (Methanothermobacter thermautotrophicus (strain ATCC 29096 / DSM 1053 / JCM 10044 / NBRC 100330 / Delta H) (Methanobacterium thermoautotrophicum)).